We begin with the raw amino-acid sequence, 464 residues long: NADH-quinone oxidoreductase subunit N 2 (464 aa).

Transmembrane regions (helical) follow at residues 12–32 (VGIIFLIILELFLPSFDLIGF), 33–53 (LGFLISFISGVLAIKYSLAGY), 62–82 (INAFSLLLKGVMYILTSFVIF), 93–113 (TFVENVYTFLLISLGLSIMVS), 117–137 (LAVILAGLELASISMYISVGM), 152–172 (LVLGSMTTAFFGIGSAFYIGA), 189–209 (FALASLFLFVAFALKVSAAPF), 227–247 (FISTVPKIGFYAVLFLLASYI), 254–274 (FSYIVGIVGVISMFWGNLVAY), 282–304 (MLAYSSIGHAGYFLIGFSRYNPL), 310–330 (IFYVIVYAFATAGAFLVLSIL), 351–371 (PFLATALALFLFALIGIPPFA), 400–420 (IIAAGYYLKLIVYMFFKEPAT), and 434–454 (IGISAFLIIVFFFGIFPNILF).

It belongs to the complex I subunit 2 family. As to quaternary structure, NDH-1 is composed of 14 different subunits. Subunits NuoA, H, J, K, L, M, N constitute the membrane sector of the complex.

The protein resides in the cell inner membrane. The catalysed reaction is a quinone + NADH + 5 H(+)(in) = a quinol + NAD(+) + 4 H(+)(out). Functionally, NDH-1 shuttles electrons from NADH, via FMN and iron-sulfur (Fe-S) centers, to quinones in the respiratory chain. The immediate electron acceptor for the enzyme in this species is believed to be ubiquinone. Couples the redox reaction to proton translocation (for every two electrons transferred, four hydrogen ions are translocated across the cytoplasmic membrane), and thus conserves the redox energy in a proton gradient. In Hydrogenobaculum sp. (strain Y04AAS1), this protein is NADH-quinone oxidoreductase subunit N 2.